The chain runs to 295 residues: sn-glycerol-3-phosphate transport system permease protein UgpA (295 aa).

The Cytoplasmic segment spans residues 1 to 11 (MSSSRPVFRSR). Residues 12-32 (WLPYLLVAPQLVITVIFFIWP) form a helical membrane-spanning segment. At 33-80 (AGEALWYSLQSVDPFGFSSQFVGLENFVALFHDSYYLDAFWTTIKFSA) the chain is on the periplasmic side. In terms of domain architecture, ABC transmembrane type-1 spans 76–284 (IKFSALVTFS…FLVIILTVVQ (209 aa)). Residues 81 to 101 (LVTFSGLLVSLFFAALVDYVV) traverse the membrane as a helical segment. Topologically, residues 102 to 109 (RGSRFYQT) are cytoplasmic. The helical transmembrane segment at 110 to 130 (LMLLPYAVAPAVAAVLWIFLF) threads the bilayer. Topologically, residues 131-157 (NPGRGLITHFLGEFGYDWNHAQNSGQA) are periplasmic. Residues 158 to 178 (MFLVVFASVWKQISYNFLFFF) form a helical membrane-spanning segment. Residues 179–207 (AALQSIPRSLVEAAAIDGAGPIRRFFRLS) lie on the Cytoplasmic side of the membrane. The chain crosses the membrane as a helical span at residues 208 to 228 (LPLIAPVSFFLLVVNLVYAFF). Topologically, residues 229–262 (DTFPVIDAATAGGPVQATTTLIYKIYCEGFTGLD) are periplasmic. Residues 263 to 283 (LSASAAQSVVLMFLVIILTVV) traverse the membrane as a helical segment. Residues 284–295 (QFRYVESKVRYQ) lie on the Cytoplasmic side of the membrane.

It belongs to the binding-protein-dependent transport system permease family. UgpAE subfamily. As to quaternary structure, the complex is composed of two ATP-binding proteins (UgpC), two transmembrane proteins (UgpA and UgpE) and a solute-binding protein (UgpB).

It is found in the cell inner membrane. Part of the ABC transporter complex UgpBAEC involved in sn-glycerol-3-phosphate (G3P) import. Probably responsible for the translocation of the substrate across the membrane. The protein is sn-glycerol-3-phosphate transport system permease protein UgpA (ugpA) of Salmonella typhi.